The primary structure comprises 291 residues: Ribosomal RNA small subunit methyltransferase H (291 aa).

S-adenosyl-L-methionine contacts are provided by residues 31-33 (GGY), D49, F76, D97, and Q104.

Belongs to the methyltransferase superfamily. RsmH family.

Its subcellular location is the cytoplasm. It catalyses the reaction cytidine(1402) in 16S rRNA + S-adenosyl-L-methionine = N(4)-methylcytidine(1402) in 16S rRNA + S-adenosyl-L-homocysteine + H(+). Functionally, specifically methylates the N4 position of cytidine in position 1402 (C1402) of 16S rRNA. This chain is Ribosomal RNA small subunit methyltransferase H, found in Anaplasma marginale (strain St. Maries).